Here is a 112-residue protein sequence, read N- to C-terminus: U15-hexatoxin-Hi1a (112 aa).

The first 18 residues, 1–18 (MNTLIAFAVLLLLSTTLG), serve as a signal peptide directing secretion. Residues 19–73 (DTDDKVSHEEIQERKELSGISEELLLQQLEAVEAALMEKERLEEMEEDGNSREKR) constitute a propeptide that is removed on maturation. 3 disulfides stabilise this stretch: Cys74-Cys88, Cys81-Cys93, and Cys87-Cys107.

This sequence belongs to the neurotoxin 14 (magi-1) family. 08 (Ltx-4) subfamily. In terms of tissue distribution, expressed by the venom gland.

The protein localises to the secreted. Functionally, probable ion channel inhibitor. The chain is U15-hexatoxin-Hi1a from Hadronyche infensa (Fraser island funnel-web spider).